Consider the following 495-residue polypeptide: Dihydrolipoyl dehydrogenase, mitochondrial (495 aa).

Residues 59-68, Lys77, and 169-171 each bind FAD; these read EKNATLGGTC and SGS. Residues Cys68 and Cys73 are joined by a disulfide bond. Residues 206-213, Glu229, Val264, and Gly299 contribute to the NAD(+) site; that span reads GAGVIGLE. Residues Asp340 and 346-349 contribute to the FAD site; that span reads MLAH. His472 functions as the Proton acceptor in the catalytic mechanism.

This sequence belongs to the class-I pyridine nucleotide-disulfide oxidoreductase family. Requires FAD as cofactor.

The protein resides in the mitochondrion matrix. The catalysed reaction is N(6)-[(R)-dihydrolipoyl]-L-lysyl-[protein] + NAD(+) = N(6)-[(R)-lipoyl]-L-lysyl-[protein] + NADH + H(+). The polypeptide is Dihydrolipoyl dehydrogenase, mitochondrial (dld-1) (Caenorhabditis elegans).